A 201-amino-acid chain; its full sequence is Protein S40-5 (201 aa).

2 disordered regions span residues 1–39 (MARGRKLTMSQSERYLGSSYSYGDSNGNSATDESELTEE) and 134–178 (SIHE…EGVG). A compositionally biased stretch (low complexity) spans 17 to 29 (GSSYSYGDSNGNS).

It belongs to the senescence regulator S40 family.

It is found in the cytoplasm. This Arabidopsis thaliana (Mouse-ear cress) protein is Protein S40-5.